Consider the following 56-residue polypeptide: MSRLFTLVLIVLAMNVMMAIISDPVVEAVGCEECPMHCKGKMAKPTCDDGVCNCNV.

A signal peptide spans 1-19 (MSRLFTLVLIVLAMNVMMA). Positions 20 to 28 (IISDPVVEA) are excised as a propeptide. 3 disulfides stabilise this stretch: C31-C47, C34-C52, and C38-C54.

The protein belongs to the short scorpion toxin superfamily. Potassium channel inhibitor family. Alpha-KTx 09 subfamily. Expressed by the venom gland.

It is found in the secreted. In terms of biological role, potassium channel inhibitor. In Buthus israelis (Israeli scorpion), this protein is Potassium channel toxin alpha-KTx 9.8.